The following is a 296-amino-acid chain: Lipoyl synthase (296 aa).

7 residues coordinate [4Fe-4S] cluster: C37, C42, C48, C63, C67, C70, and S276. Positions 49–265 constitute a Radical SAM core domain; it reads WSKKHTTVMI…ERVAKTKGFL (217 aa).

It belongs to the radical SAM superfamily. Lipoyl synthase family. Requires [4Fe-4S] cluster as cofactor.

Its subcellular location is the cytoplasm. It catalyses the reaction [[Fe-S] cluster scaffold protein carrying a second [4Fe-4S](2+) cluster] + N(6)-octanoyl-L-lysyl-[protein] + 2 oxidized [2Fe-2S]-[ferredoxin] + 2 S-adenosyl-L-methionine + 4 H(+) = [[Fe-S] cluster scaffold protein] + N(6)-[(R)-dihydrolipoyl]-L-lysyl-[protein] + 4 Fe(3+) + 2 hydrogen sulfide + 2 5'-deoxyadenosine + 2 L-methionine + 2 reduced [2Fe-2S]-[ferredoxin]. It functions in the pathway protein modification; protein lipoylation via endogenous pathway; protein N(6)-(lipoyl)lysine from octanoyl-[acyl-carrier-protein]: step 2/2. Catalyzes the radical-mediated insertion of two sulfur atoms into the C-6 and C-8 positions of the octanoyl moiety bound to the lipoyl domains of lipoate-dependent enzymes, thereby converting the octanoylated domains into lipoylated derivatives. This Rickettsia conorii (strain ATCC VR-613 / Malish 7) protein is Lipoyl synthase.